The primary structure comprises 688 residues: MKNYLLFEIGVEEMPSRFVGSTLEQLKNNLSKLFDENRIAFDKINAYGTPRRLTLVVEGLSDRQNDLEEEIKGPAKKIAVDAENNLTKPALGFIKSKGLSESDIYFKQVGKEEYIFATIKQDGKETSEVLKDILPETIKSVVFPKAMRWGGKNLKFARPIRWIVALLNDKVLEFDLEGIISSNVTKGHRFLGESTIEVDSIEDYFEKLEKNYIVLDQNKRKEMIRKQCIEVANSLGGEVEFDEDLLEEVTYLVEYPTAFYGEFDVDYIKLPKEVVITPMKQHQRYFPVLKEGKLLPNFIAVRNGDSYRIDNVKAGNEKVLEARLADALFFYREDTKRNLESYIEKLKTVVFQVKLGTIYDKTLRLEKLSADILDSLGLVDEKTDTIRAAKLSKADLVTGMVGEFDELQGFMGKEYAKVGGENDVVSEAIFEHYLPRFAGDILPKTNAGVALSIADKLDSIAGFFAIGIQPTGSQDPYALRRQALGILSILMDRKVAVDIKVLIEHALDNYSELDFDKEEVVEQIMNFFNERVKNLFKDLGIRYDVVDAVLSSDINDVSDMHMRALELNNWLEKDELVEMLTAFNRVSTLAQKAESDKIDESLLKEDAEIKLYNEFKQVKIKVNELLKDKKYGIALDEFASLRPVVDNLFDTVMVMDNDEAIKNNRLALLKQVYDTMLEICDLSKIVYK.

This sequence belongs to the class-II aminoacyl-tRNA synthetase family. In terms of assembly, tetramer of two alpha and two beta subunits.

It is found in the cytoplasm. It carries out the reaction tRNA(Gly) + glycine + ATP = glycyl-tRNA(Gly) + AMP + diphosphate. The sequence is that of Glycine--tRNA ligase beta subunit from Clostridioides difficile (strain 630) (Peptoclostridium difficile).